A 295-amino-acid chain; its full sequence is Aspartate carbamoyltransferase catalytic subunit (295 aa).

R54 and T55 together coordinate carbamoyl phosphate. L-aspartate is bound at residue K82. R104, H132, and Q135 together coordinate carbamoyl phosphate. 2 residues coordinate L-aspartate: R165 and R218. G257 and P258 together coordinate carbamoyl phosphate.

It belongs to the aspartate/ornithine carbamoyltransferase superfamily. ATCase family. In terms of assembly, heterododecamer (2C3:3R2) of six catalytic PyrB chains organized as two trimers (C3), and six regulatory PyrI chains organized as three dimers (R2).

It carries out the reaction carbamoyl phosphate + L-aspartate = N-carbamoyl-L-aspartate + phosphate + H(+). It functions in the pathway pyrimidine metabolism; UMP biosynthesis via de novo pathway; (S)-dihydroorotate from bicarbonate: step 2/3. Its function is as follows. Catalyzes the condensation of carbamoyl phosphate and aspartate to form carbamoyl aspartate and inorganic phosphate, the committed step in the de novo pyrimidine nucleotide biosynthesis pathway. The protein is Aspartate carbamoyltransferase catalytic subunit of Wolbachia pipientis wMel.